Here is a 244-residue protein sequence, read N- to C-terminus: Zinc import ATP-binding protein ZnuC 2 (244 aa).

The region spanning 3 to 218 (IGCASLTIQL…PEYLALFGID (216 aa)) is the ABC transporter domain. ATP is bound at residue 35–42 (GPNGSGKT).

This sequence belongs to the ABC transporter superfamily. Zinc importer (TC 3.A.1.15.5) family. In terms of assembly, the complex is composed of two ATP-binding proteins (ZnuC), two transmembrane proteins (ZnuB) and a solute-binding protein (ZnuA).

Its subcellular location is the cell inner membrane. The enzyme catalyses Zn(2+)(out) + ATP(in) + H2O(in) = Zn(2+)(in) + ADP(in) + phosphate(in) + H(+)(in). In terms of biological role, part of the ABC transporter complex ZnuABC involved in zinc import. Responsible for energy coupling to the transport system. This is Zinc import ATP-binding protein ZnuC 2 from Hahella chejuensis (strain KCTC 2396).